The chain runs to 476 residues: Ribulose bisphosphate carboxylase large chain (476 aa).

Substrate is bound by residues N116 and T166. The active-site Proton acceptor is K168. K170 contributes to the substrate binding site. K194, D196, and E197 together coordinate Mg(2+). K194 carries the N6-carboxylysine modification. H286 serves as the catalytic Proton acceptor. Substrate contacts are provided by R287, H319, and S371.

It belongs to the RuBisCO large chain family. Type I subfamily. As to quaternary structure, heterohexadecamer of 8 large chains and 8 small chains. Mg(2+) serves as cofactor.

The catalysed reaction is 2 (2R)-3-phosphoglycerate + 2 H(+) = D-ribulose 1,5-bisphosphate + CO2 + H2O. The enzyme catalyses D-ribulose 1,5-bisphosphate + O2 = 2-phosphoglycolate + (2R)-3-phosphoglycerate + 2 H(+). In terms of biological role, ruBisCO catalyzes two reactions: the carboxylation of D-ribulose 1,5-bisphosphate, the primary event in carbon dioxide fixation, as well as the oxidative fragmentation of the pentose substrate. Both reactions occur simultaneously and in competition at the same active site. The chain is Ribulose bisphosphate carboxylase large chain from Pseudonocardia dioxanivorans (strain ATCC 55486 / DSM 44775 / JCM 13855 / CB1190).